The chain runs to 304 residues: Meiotically up-regulated gene 86 protein (304 aa).

Low complexity predominate over residues 1–12; that stretch reads MSSNPSRSNSRS. Positions 1–23 are disordered; the sequence is MSSNPSRSNSRSKNGDLESGLKF. The next 6 helical transmembrane spans lie at 93 to 113, 123 to 143, 150 to 170, 188 to 208, 212 to 232, and 247 to 267; these read PAPF…LFNV, MVTA…SMWE, FGGA…SIFI, AIGL…LCTV, LAFF…ACAF, and VGGA…MAGL.

It belongs to the acetate uptake transporter (AceTr) (TC 2.A.96) family.

It localises to the endoplasmic reticulum membrane. Its subcellular location is the golgi apparatus. The protein resides in the golgi stack membrane. It is found in the vacuole membrane. Functionally, has a role in meiosis. This chain is Meiotically up-regulated gene 86 protein (mug86), found in Schizosaccharomyces pombe (strain 972 / ATCC 24843) (Fission yeast).